The chain runs to 661 residues: UvrABC system protein B (661 aa).

The Helicase ATP-binding domain occupies 28–414 (DGVNEGKRHQ…HTDEMVEQII (387 aa)). 41–48 (GATGTGKT) serves as a coordination point for ATP. The short motif at 94–117 (YYDYYQPEAYVPSTDTFIEKDASI) is the Beta-hairpin element. The Helicase C-terminal domain occupies 432–598 (QIDDLLSEIQ…TINKKIHDVI (167 aa)). The disordered stretch occupies residues 603 to 624 (ESDETNQQQQTELPKKMTKKER). The region spanning 625–660 (QKTIENIEKEMKKAAKDLDFEKATELRDMLFELKAE) is the UVR domain.

This sequence belongs to the UvrB family. As to quaternary structure, forms a heterotetramer with UvrA during the search for lesions. Interacts with UvrC in an incision complex.

It is found in the cytoplasm. Its function is as follows. The UvrABC repair system catalyzes the recognition and processing of DNA lesions. A damage recognition complex composed of 2 UvrA and 2 UvrB subunits scans DNA for abnormalities. Upon binding of the UvrA(2)B(2) complex to a putative damaged site, the DNA wraps around one UvrB monomer. DNA wrap is dependent on ATP binding by UvrB and probably causes local melting of the DNA helix, facilitating insertion of UvrB beta-hairpin between the DNA strands. Then UvrB probes one DNA strand for the presence of a lesion. If a lesion is found the UvrA subunits dissociate and the UvrB-DNA preincision complex is formed. This complex is subsequently bound by UvrC and the second UvrB is released. If no lesion is found, the DNA wraps around the other UvrB subunit that will check the other stand for damage. The polypeptide is UvrABC system protein B (Staphylococcus epidermidis (strain ATCC 35984 / DSM 28319 / BCRC 17069 / CCUG 31568 / BM 3577 / RP62A)).